A 401-amino-acid polypeptide reads, in one-letter code: 8-amino-7-oxononanoate synthase (401 aa).

A substrate-binding site is contributed by arginine 24. 111–112 (GF) contributes to the pyridoxal 5'-phosphate binding site. Histidine 137 serves as a coordination point for substrate. Residues serine 183, histidine 211, and threonine 240 each coordinate pyridoxal 5'-phosphate. Residue lysine 243 is modified to N6-(pyridoxal phosphate)lysine. Threonine 357 is a substrate binding site.

It belongs to the class-II pyridoxal-phosphate-dependent aminotransferase family. BioF subfamily. As to quaternary structure, homodimer. It depends on pyridoxal 5'-phosphate as a cofactor.

The catalysed reaction is 6-carboxyhexanoyl-[ACP] + L-alanine + H(+) = (8S)-8-amino-7-oxononanoate + holo-[ACP] + CO2. It functions in the pathway cofactor biosynthesis; biotin biosynthesis. Functionally, catalyzes the decarboxylative condensation of pimeloyl-[acyl-carrier protein] and L-alanine to produce 8-amino-7-oxononanoate (AON), [acyl-carrier protein], and carbon dioxide. The polypeptide is 8-amino-7-oxononanoate synthase (Xanthomonas euvesicatoria pv. vesicatoria (strain 85-10) (Xanthomonas campestris pv. vesicatoria)).